The following is a 474-amino-acid chain: uncharacterized protein (474 aa).

Over residues 1 to 14 (MGSRYPSHQLSNGL) the composition is skewed to polar residues. The disordered stretch occupies residues 1–137 (MGSRYPSHQL…QSGGVTRQNS (137 aa)). A Phosphoserine modification is found at serine 45. Composition is skewed to polar residues over residues 73–83 (RSGSFAGTAQS), 97–113 (SLAS…NSGP), and 125–137 (SGPQ…RQNS). Phosphoserine is present on serine 169. Helical transmembrane passes span 210–230 (VLWL…FILG) and 236–256 (ILLV…IWNI).

Its subcellular location is the membrane. This is an uncharacterized protein from Arabidopsis thaliana (Mouse-ear cress).